A 120-amino-acid polypeptide reads, in one-letter code: ATP-dependent Clp protease adapter protein ClpS (120 aa).

Residues 1–27 are disordered; that stretch reads MHAPSEIRLTFNQDRPQSNEDDGSGLA.

It belongs to the ClpS family. In terms of assembly, binds to the N-terminal domain of the chaperone ClpA.

Functionally, involved in the modulation of the specificity of the ClpAP-mediated ATP-dependent protein degradation. In Pseudomonas putida (strain GB-1), this protein is ATP-dependent Clp protease adapter protein ClpS.